The sequence spans 244 residues: Chlorosome protein I (244 aa).

In terms of domain architecture, 2Fe-2S ferredoxin-type spans 1–95; sequence MNLIINDKTA…TVKVLSRPEE (95 aa). Residues C33, C39, C42, and C77 each coordinate [2Fe-2S] cluster.

Requires [2Fe-2S] cluster as cofactor.

The protein resides in the chlorosome. Could play a direct role in the oxidation or reduction of the quenching species formed in the chlorosome. This chain is Chlorosome protein I (csmI), found in Chlorobaculum tepidum (strain ATCC 49652 / DSM 12025 / NBRC 103806 / TLS) (Chlorobium tepidum).